A 205-amino-acid chain; its full sequence is High frequency lysogenization protein HflD homolog (205 aa).

The protein belongs to the HflD family.

Its subcellular location is the cytoplasm. The protein resides in the cell inner membrane. This chain is High frequency lysogenization protein HflD homolog, found in Haemophilus influenzae (strain ATCC 51907 / DSM 11121 / KW20 / Rd).